The chain runs to 661 residues: PAN2-PAN3 deadenylation complex subunit PAN3 (661 aa).

Disordered regions lie at residues 1 to 26 and 53 to 130; these read MASAGKPALDDSRRGTGSPKIKAREN and DPHK…LRQD. The C3H1-type zinc finger occupies 26-55; that stretch reads NAKDTLCRNITIYGRCRYEDKGCAFNHDPH. Low complexity predominate over residues 75–102; the sequence is SFTPSLLSSNGSSPTSTPATTKKMTTIS. A compositionally biased stretch (polar residues) spans 115 to 130; it reads SVVSRSNASTPGLRQD. A pseudokinase domain region spans residues 263–524; sequence QTLPNTQLPA…NIDIFITGIS (262 aa). Residues Arg-315, 364–371, and 424–425 contribute to the ATP site; these read DYHPLSKT and SK. The stretch at 525-563 forms a coiled coil; that stretch reads SQLMSTFDSALHLDDQLTSDLSRELENGRLVRLMTKLNF. The tract at residues 564–661 is knob domain; the sequence is VNERPEYEHD…ALMKPARRMH (98 aa).

The protein belongs to the protein kinase superfamily. PAN3 family. Homodimer. Forms a heterotrimer with a catalytic subunit pan2 to form the poly(A)-nuclease (PAN) deadenylation complex. Interacts (via PAM-2 motif) with poly(A)-binding protein pab1 (via PABC domain), conferring substrate specificity of the enzyme complex.

Its subcellular location is the cytoplasm. Functionally, regulatory subunit of the poly(A)-nuclease (PAN) deadenylation complex, one of two cytoplasmic mRNA deadenylases involved in mRNA turnover. PAN specifically shortens poly(A) tails of RNA and the activity is stimulated by poly(A)-binding protein pab1. PAN deadenylation is followed by rapid degradation of the shortened mRNA tails by the CCR4-NOT complex. Deadenylated mRNAs are then degraded by two alternative mechanisms, namely exosome-mediated 3'-5' exonucleolytic degradation, or deadenylation-dependent mRNA decaping and subsequent 5'-3' exonucleolytic degradation by xrn1. May also be involved in post-transcriptional maturation of mRNA poly(A) tails. pan3 acts as a positive regulator for PAN activity, recruiting the catalytic subunit pan2 to mRNA via its interaction with RNA and with pab1. This Neosartorya fischeri (strain ATCC 1020 / DSM 3700 / CBS 544.65 / FGSC A1164 / JCM 1740 / NRRL 181 / WB 181) (Aspergillus fischerianus) protein is PAN2-PAN3 deadenylation complex subunit PAN3.